A 1170-amino-acid polypeptide reads, in one-letter code: Cellulose synthase-like protein D2 (1170 aa).

2 disordered regions span residues 1-75 (MASN…PESG) and 269-295 (NEVD…EFTS). Over residues 10 to 24 (RHSNSSRLSRMSYSG) the composition is skewed to low complexity. Positions 273-288 (NGGGGGGGGGLGGGDG) are enriched in gly residues. 2 helical membrane passes run 311-331 (VLSP…LFLA) and 341-361 (AMWL…SWLL). The active site involves Asp-441. A coiled-coil region spans residues 527-551 (HAREEIKAMKRQREAALDDVVEAVK). Asp-873 is a catalytic residue. The next 6 membrane-spanning stretches (helical) occupy residues 955 to 975 (IFLI…QFIV), 981 to 1001 (TFLT…VLEI), 1027 to 1047 (LAAV…SFTL), 1070 to 1090 (SLMI…AVGF), 1104 to 1124 (LLGG…FAKG), and 1134 to 1154 (TIVF…WVAI).

Belongs to the glycosyltransferase 2 family. Plant cellulose synthase-like D subfamily.

It is found in the golgi apparatus membrane. Functionally, thought to be a Golgi-localized beta-glycan synthase that polymerize the backbones of noncellulosic polysaccharides (hemicelluloses) of plant cell wall. This Oryza sativa subsp. indica (Rice) protein is Cellulose synthase-like protein D2 (CSLD2).